We begin with the raw amino-acid sequence, 285 residues long: Transcription factor JAMYB (285 aa).

2 HTH myb-type domains span residues 26–78 and 79–133; these read SAEL…LNYL and RPDV…QKHA. DNA-binding regions (H-T-H motif) lie at residues 54 to 78 and 106 to 129; these read WNALARAAGLKRTGKSCRLRWLNYL and WSKIAQHLPGRTDNEIKNYWRTRV.

It localises to the nucleus. Its function is as follows. Probable transcription factor that may be involved in the jasmonate-dependent defense responses to the rice blast fungus Magnaporthe oryzae. Does not seem to function in the salicylic acid-dependent signaling pathway. The polypeptide is Transcription factor JAMYB (Oryza sativa subsp. japonica (Rice)).